Consider the following 435-residue polypeptide: Glutamyl-tRNA reductase (435 aa).

Substrate-binding positions include 49–52 (TCNR), serine 109, 114–116 (EGQ), and glutamine 120. The active-site Nucleophile is the cysteine 50. 198 to 203 (GAGRMS) is an NADP(+) binding site.

The protein belongs to the glutamyl-tRNA reductase family. As to quaternary structure, homodimer.

The catalysed reaction is (S)-4-amino-5-oxopentanoate + tRNA(Glu) + NADP(+) = L-glutamyl-tRNA(Glu) + NADPH + H(+). It functions in the pathway porphyrin-containing compound metabolism; protoporphyrin-IX biosynthesis; 5-aminolevulinate from L-glutamyl-tRNA(Glu): step 1/2. Its pathway is porphyrin-containing compound metabolism; chlorophyll biosynthesis. Catalyzes the NADPH-dependent reduction of glutamyl-tRNA(Glu) to glutamate 1-semialdehyde (GSA). The sequence is that of Glutamyl-tRNA reductase from Prochlorococcus marinus (strain MIT 9515).